The sequence spans 315 residues: Probable cytosolic iron-sulfur protein assembly protein CIAO1 homolog (315 aa).

WD repeat units follow at residues 11-50 (GHED…WVCK), 56-95 (GHQR…FESC), 100-139 (GHEN…EFEC), 145-188 (CHSQ…CTLD), 189-229 (KHAS…RSWE), 236-275 (RHPR…CSWR), and 283-315 (AHSQ…WQID).

Belongs to the WD repeat CIA1 family.

Functionally, essential component of the cytosolic iron-sulfur (Fe/S) protein assembly machinery. Required for the maturation of extramitochondrial Fe/S proteins. The protein is Probable cytosolic iron-sulfur protein assembly protein CIAO1 homolog of Ixodes scapularis (Black-legged tick).